A 273-amino-acid polypeptide reads, in one-letter code: MEGLSGNCPASHCRDFISHPALGRHSGSLASHQGTVYPDITTQDAGRQFPAPQASSGTSLGYGYAFGSPYYGCRLSYSHNVNLQQKSYHPAEKYMETSGALPAEELSSRSKEFAIYPSFASSYQTVPGYLDVPVVPGISAHPESRHEALFPMDSYQHWALSNGWDEQLYCSKEQTHFNHLWKSQFSDVVPHQAEMNGYRRGRKKRVPYTKIQLKELEKEYAASKFITKDRRRRISATTSLSERQVTIWFQNRRVKEKKFVCKSSKSSTNMHSV.

The homeobox DNA-binding region spans 201 to 260; the sequence is GRKKRVPYTKIQLKELEKEYAASKFITKDRRRRISATTSLSERQVTIWFQNRRVKEKKFV.

This sequence belongs to the Abd-B homeobox family.

It is found in the nucleus. Functionally, sequence-specific transcription factor which is part of a developmental regulatory system that provides cells with specific positional identities on the anterior-posterior axis. Plays a role in early embryonic development. This Danio rerio (Zebrafish) protein is Homeobox protein Hox-C13b (hoxc13b).